We begin with the raw amino-acid sequence, 580 residues long: Laccase-20 (580 aa).

The signal sequence occupies residues 1-23 (MVASLLCTVAVAVLAVAAVGGEA). Plastocyanin-like domains follow at residues 31-147 (VVHE…PRDG) and 156-310 (KDVP…YTSA). Asn-36 and Asn-42 each carry an N-linked (GlcNAc...) asparagine glycan. Cu cation-binding residues include His-81 and His-83. Asn-115 carries N-linked (GlcNAc...) asparagine glycosylation. His-126 and His-128 together coordinate Cu cation. Asn-200, Asn-339, Asn-392, Asn-429, and Asn-460 each carry an N-linked (GlcNAc...) asparagine glycan. The region spanning 419–561 (DFPVRPPRPY…ATAFIVEDGP (143 aa)) is the Plastocyanin-like 3 domain. Residues Asn-478, His-481, His-483, His-540, Cys-541, His-542, His-546, and Met-551 each contribute to the Cu cation site. The tract at residues 560–580 (GPTPETSLPPPPPEFKRCDAS) is disordered.

It belongs to the multicopper oxidase family. Cu cation serves as cofactor.

Its subcellular location is the secreted. The protein localises to the extracellular space. It is found in the apoplast. The enzyme catalyses 4 hydroquinone + O2 = 4 benzosemiquinone + 2 H2O. In terms of biological role, lignin degradation and detoxification of lignin-derived products. This is Laccase-20 (LAC20) from Oryza sativa subsp. indica (Rice).